A 373-amino-acid chain; its full sequence is MRFVDEYRAPEQVMQLIEHLRERASHLSYTAERPLRIMEVCGGHTHAIFKFGLDQLLPENVEFIHGPGCPVCVLPMGRIDTCVEIASHPEVIFCTFGDAMRVPGKQGSLLQAKARGADVRIVYSPMDALKLAQENPTRKVVFFGLGFETTMPTTAITLQQAKARDVQNFYFFCQHITLIPTLRSLLEQPDNGIDAFLAPGHVSMVIGTDAYNFIASDFHRPLVVAGFEPLDLLQGVVMLVQQKIAAHSKVENQYRRVVPDAGNLLAQQAIADVFCVNGDSEWRGLGVIESSGVHLTPDYQRFDAEAHFRPAPQQVCDDPRARCGEVLTGKCKPHQCPLFGNTCNPQTAFGALMVSSEGACAAWYQYRQQESEA.

Fe cation is bound by residues C41, C69, and C72.

The protein belongs to the HypD family. As to quaternary structure, monomer. Interacts with HypC. Forms a complex with HypC, or HybG, and HypE. The cofactor is [4Fe-4S] cluster.

It functions in the pathway protein modification; [NiFe] hydrogenase maturation. Functionally, involved in the maturation of [NiFe] hydrogenases. Involved in the biosynthesis of the Fe(CN)(2)CO cofactor. HypD may act as a scaffold on which the Fe(CN)(2)CO cofactor is formed. In complex with HypC, accepts the cyanide ligand generated by HypF and HypE, and also coordinates the carbon monoxide ligand. Required for the formation of all three hydrogenase isoenzymes. The polypeptide is Hydrogenase maturation factor HypD (Escherichia coli (strain K12)).